The primary structure comprises 213 residues: Octanoyltransferase (213 aa).

One can recognise a BPL/LPL catalytic domain in the interval 35-213 (DERGDAVLLL…ERHLPTLIEP (179 aa)). Substrate-binding positions include 73-80 (RGGKITWH), 145-147 (AIG), and 158-160 (GFS). The Acyl-thioester intermediate role is filled by Cys176.

Belongs to the LipB family.

The protein localises to the cytoplasm. It carries out the reaction octanoyl-[ACP] + L-lysyl-[protein] = N(6)-octanoyl-L-lysyl-[protein] + holo-[ACP] + H(+). The protein operates within protein modification; protein lipoylation via endogenous pathway; protein N(6)-(lipoyl)lysine from octanoyl-[acyl-carrier-protein]: step 1/2. Catalyzes the transfer of endogenously produced octanoic acid from octanoyl-acyl-carrier-protein onto the lipoyl domains of lipoate-dependent enzymes. Lipoyl-ACP can also act as a substrate although octanoyl-ACP is likely to be the physiological substrate. In Salinispora tropica (strain ATCC BAA-916 / DSM 44818 / JCM 13857 / NBRC 105044 / CNB-440), this protein is Octanoyltransferase.